The primary structure comprises 313 residues: Coproporphyrin III ferrochelatase (313 aa).

Fe(2+) is bound by residues His-191 and Glu-270.

It belongs to the ferrochelatase family.

It is found in the cytoplasm. The enzyme catalyses Fe-coproporphyrin III + 2 H(+) = coproporphyrin III + Fe(2+). The protein operates within porphyrin-containing compound metabolism; protoheme biosynthesis. Its function is as follows. Involved in coproporphyrin-dependent heme b biosynthesis. Catalyzes the insertion of ferrous iron into coproporphyrin III to form Fe-coproporphyrin III. The protein is Coproporphyrin III ferrochelatase of Enterococcus faecalis (strain ATCC 700802 / V583).